We begin with the raw amino-acid sequence, 159 residues long: Ribosomal RNA large subunit methyltransferase H (159 aa).

Residues leucine 76, glycine 108, and 127 to 132 each bind S-adenosyl-L-methionine; that span reads FGLLTF.

Belongs to the RNA methyltransferase RlmH family. As to quaternary structure, homodimer.

It is found in the cytoplasm. It catalyses the reaction pseudouridine(1915) in 23S rRNA + S-adenosyl-L-methionine = N(3)-methylpseudouridine(1915) in 23S rRNA + S-adenosyl-L-homocysteine + H(+). Functionally, specifically methylates the pseudouridine at position 1915 (m3Psi1915) in 23S rRNA. The polypeptide is Ribosomal RNA large subunit methyltransferase H (Streptococcus thermophilus (strain CNRZ 1066)).